The sequence spans 485 residues: Rhamnulokinase (485 aa).

8–12 (ASSGR) is a binding site for ATP. Residues Gly78 and 231–233 (HDT) each bind substrate. Asp232 functions as the Proton acceptor in the catalytic mechanism. Thr254 is an ATP binding site. Asn291 contacts substrate. ATP is bound at residue Gln299. A disulfide bridge connects residues Cys348 and Cys365. Gly397 serves as a coordination point for ATP. A disulfide bridge connects residues Cys408 and Cys412.

Belongs to the rhamnulokinase family. The cofactor is Mg(2+).

It catalyses the reaction L-rhamnulose + ATP = L-rhamnulose 1-phosphate + ADP + H(+). It participates in carbohydrate degradation; L-rhamnose degradation; glycerone phosphate from L-rhamnose: step 2/3. Involved in the catabolism of L-rhamnose (6-deoxy-L-mannose). Catalyzes the transfer of the gamma-phosphate group from ATP to the 1-hydroxyl group of L-rhamnulose to yield L-rhamnulose 1-phosphate. The protein is Rhamnulokinase of Yersinia pestis bv. Antiqua (strain Antiqua).